The chain runs to 161 residues: Protein-lysine N-methyltransferase (161 aa).

The short motif at 34–40 (DLGCGDG) is the DxGxGxG SAM-binding motif element.

Belongs to the class I-like SAM-binding methyltransferase superfamily. Monomer.

The enzyme catalyses L-lysyl-[protein] + S-adenosyl-L-methionine = N(6)-methyl-L-lysyl-[protein] + S-adenosyl-L-homocysteine + H(+). Catalyzes the methylation of lysine residues in target proteins, using S-adenosyl-L-methionine (SAM) as the methyl donor. Exhibits broad substrate specificity, being able to methylate the crenarchaeal chromatin protein Cren7 primarily at 'Lys-11', 'Lys-16' and 'Lys-31', as well as a number of recombinant Sulfolobus proteins in vitro. Methylates lysine residues in a rather sequence-independent manner. The chain is Protein-lysine N-methyltransferase from Saccharolobus islandicus (strain REY15A) (Sulfolobus islandicus).